Consider the following 85-residue polypeptide: U4-theraphotoxin-Hhn1a (85 aa).

The signal sequence occupies residues 1 to 22; it reads MKMTLIAILTCAAVLVLHTTAA. A propeptide spanning residues 23 to 48 is cleaved from the precursor; that stretch reads EELEAESQLMEVGMPDTELEAVDEER. Cystine bridges form between cysteine 52-cysteine 66, cysteine 56-cysteine 77, and cysteine 71-cysteine 82.

Belongs to the neurotoxin 12 (Hwtx-2) family. 02 (Hwtx-2) subfamily. In terms of assembly, monomer. Expressed by the venom gland.

It is found in the secreted. In terms of biological role, neurotoxin active on both insects and mammals. The sequence is that of U4-theraphotoxin-Hhn1a from Cyriopagopus hainanus (Chinese bird spider).